We begin with the raw amino-acid sequence, 197 residues long: dCTP deaminase (197 aa).

DCTP is bound at residue 105–110 (RSSIAR). Glutamate 133 functions as the Proton donor/acceptor in the catalytic mechanism. Tyrosine 166 and glutamine 177 together coordinate dCTP. The interval 172–197 (NKYAGQKDPKPSRLAEELSLEQLRGR) is disordered. The span at 176–187 (GQKDPKPSRLAE) shows a compositional bias: basic and acidic residues.

This sequence belongs to the dCTP deaminase family. In terms of assembly, homotrimer.

It catalyses the reaction dCTP + H2O + H(+) = dUTP + NH4(+). It participates in pyrimidine metabolism; dUMP biosynthesis; dUMP from dCTP (dUTP route): step 1/2. Functionally, catalyzes the deamination of dCTP to dUTP. The polypeptide is dCTP deaminase (Thermomicrobium roseum (strain ATCC 27502 / DSM 5159 / P-2)).